The chain runs to 39 residues: Large ribosomal subunit protein bL36 (39 aa).

The protein belongs to the bacterial ribosomal protein bL36 family.

This is Large ribosomal subunit protein bL36 from Lactiplantibacillus plantarum (strain ATCC BAA-793 / NCIMB 8826 / WCFS1) (Lactobacillus plantarum).